The sequence spans 1005 residues: MSALSASLAAAAAAARASETSRESNNVAVTKARPPQHTLVKPAPAKPPRPVARRPKQPVKITVDTSVANTPAPQGSSATSAAAAAARHFKKQKDEQSSPKLSPHHRPPASHRNSGESAKTPSSDSRPASTTSTIPVTPVSATTPSSTVAAAASAAAKRSSTFNKSVPTPVVSDIMKKEQEENRAAAAAAAAQEKATQIIRDLPSPSNSVRSKRLSQSSLVPVLSDEDIYNHRRYARSSQSFATIPTDEDSPGEMGDFEDNNQVHRERARGIQSAAKHANRLSQTSMDSTHTSQQLQPVVSPHTGLPQEGSVLAAALKAGSNASSTMERISLTNEAKEREKAEKRQRKDAKAKAKLLAQANAVYQQSTNESHHAHHHQYHQGNIFKRVIGKSGKPIDPFQGFSPNFSERPGEHFHNHQREMQGAPDGIRRSMDTSRQSIDAPRQSLDAARQSIDTPRELTTNDTSPIPIQPLKSHDAGAVSDLPTSLDEPGLSGHPHLQQSFSNNNALQTVKSSTDDSMSIASLDSVDDSGPGRPPLLAPIPIRNASIIPVSSESESEDIRRGHRRHLSSSQSQRNSLQFPMSPTFSASPAKQLITPEQLLPKRRRGIARTPSVSSSAPRSSSPVISIPLERSSTLQSTLQGSPMNSPVAKSPVFFEGNNGSTNGGLGSSMSNSPPDSELALTPSESTAHSYFAREYREPKSSSTRGVEGASRLAKKLPHRHLAAGGKSIVKSIWNKATPDAPPPPPVSTGGMKTSLRKQPKKKFNEDKPWKHHNDADTLTDADRKRYDGVWATNRGAHVPYYMEPEEYDILIDEEEFYDEGFLSDSDFTDSDSDDDSVSSAEYIMSGENIGNDDVVVSDQNDAVHGYIVSRLWRRSRLPDERLSDIWELVDRCNDGTLDREGFLVGMWLVDQCLYGRKLPNKVDPRVWGSVGRLNVNIKIRQKEPKRNSAKRKARRKVRRDRKELVRERERNEKERRKDEKKEKKDEKKDKKDDRRRDKKRVGEA.

A compositionally biased stretch (low complexity) spans 1–18 (MSALSASLAAAAAAARAS). 8 disordered regions span residues 1–170 (MSAL…PTPV), 183–219 (RAAA…QSSL), 239–258 (QSFA…GDFE), 272–350 (QSAA…KDAK), 402–587 (SPNF…TFSA), 602–624 (KRRR…SSPV), 657–682 (GNNG…LALT), and 735–776 (NKAT…HNDA). Positions 63-75 (VDTSVANTPAPQG) are enriched in polar residues. The segment covering 76 to 86 (SSATSAAAAAA) has biased composition (low complexity). A compositionally biased stretch (polar residues) spans 111 to 126 (HRNSGESAKTPSSDSR). The span at 127 to 161 (PASTTSTIPVTPVSATTPSSTVAAAASAAAKRSST) shows a compositional bias: low complexity. Polar residues predominate over residues 204-219 (SPSNSVRSKRLSQSSL). The span at 246-258 (TDEDSPGEMGDFE) shows a compositional bias: acidic residues. 2 stretches are compositionally biased toward polar residues: residues 280 to 297 (RLSQ…QLQP) and 320 to 333 (SNAS…SLTN). Basic and acidic residues predominate over residues 408-419 (RPGEHFHNHQRE). Polar residues-rich tracts occupy residues 451–466 (SIDT…TSPI) and 497–522 (LQQS…SIAS). Low complexity-rich tracts occupy residues 568–578 (SSSQSQRNSLQ) and 608–624 (ARTP…SSPV). Residues 763-776 (KFNEDKPWKHHNDA) show a composition bias toward basic and acidic residues. The EH domain occupies 845–934 (MSGENIGNDD…PRVWGSVGRL (90 aa)). The disordered stretch occupies residues 942 to 1005 (QKEPKRNSAK…RRDKKRVGEA (64 aa)). The segment covering 948-960 (NSAKRKARRKVRR) has biased composition (basic residues). Over residues 961–1005 (DRKELVRERERNEKERRKDEKKEKKDEKKDKKDDRRRDKKRVGEA) the composition is skewed to basic and acidic residues.

It belongs to the IRS4 family.

Its function is as follows. Positive regulator of phosphatidylinositol 4,5-bisphosphate turnover and negatively regulates signaling through the cell integrity pathway. Involved in rDNA silencing. The chain is Increased rDNA silencing protein 4 (IRS4) from Yarrowia lipolytica (strain CLIB 122 / E 150) (Yeast).